Consider the following 328-residue polypeptide: Aspartate carbamoyltransferase catalytic subunit (328 aa).

Positions 70 and 71 each coordinate carbamoyl phosphate. An L-aspartate-binding site is contributed by K98. Residues R120, H150, and Q153 each contribute to the carbamoyl phosphate site. L-aspartate-binding residues include R183 and R238. The carbamoyl phosphate site is built by G279 and P280.

Belongs to the aspartate/ornithine carbamoyltransferase superfamily. ATCase family. As to quaternary structure, heterododecamer (2C3:3R2) of six catalytic PyrB chains organized as two trimers (C3), and six regulatory PyrI chains organized as three dimers (R2).

The catalysed reaction is carbamoyl phosphate + L-aspartate = N-carbamoyl-L-aspartate + phosphate + H(+). It functions in the pathway pyrimidine metabolism; UMP biosynthesis via de novo pathway; (S)-dihydroorotate from bicarbonate: step 2/3. In terms of biological role, catalyzes the condensation of carbamoyl phosphate and aspartate to form carbamoyl aspartate and inorganic phosphate, the committed step in the de novo pyrimidine nucleotide biosynthesis pathway. The polypeptide is Aspartate carbamoyltransferase catalytic subunit (Methylococcus capsulatus (strain ATCC 33009 / NCIMB 11132 / Bath)).